Consider the following 80-residue polypeptide: UPF0291 protein llmg_1475 (80 aa).

It belongs to the UPF0291 family.

Its subcellular location is the cytoplasm. The sequence is that of UPF0291 protein llmg_1475 from Lactococcus lactis subsp. cremoris (strain MG1363).